The chain runs to 2352 residues: Ectopic P granules protein 5 (2352 aa).

2 disordered regions span residues 1–112 (MAEL…IFPR) and 1315–1335 (KNRE…SSAK). The span at 66–81 (DSLKREEASEPLKDVR) shows a compositional bias: basic and acidic residues.

This sequence belongs to the EPG5 family. In terms of tissue distribution, expressed in pharyngeal and body wall muscles and intestine cells.

It is found in the cytoplasm. The protein localises to the cytoplasmic vesicle. It localises to the phagosome membrane. In terms of biological role, involved in the maturation of autophagosomes into autolysosomes during starvation-induced autotrophy. Specifically, involved in the clearance of apoptotic cells by promoting the delivery of engulfed apoptotic cells to the lysosome. The sequence is that of Ectopic P granules protein 5 from Caenorhabditis elegans.